The following is a 108-amino-acid chain: Anti-sigma-B factor antagonist (108 aa).

One can recognise an STAS domain in the interval 3–108; that stretch reads LNIETITHDD…MHVNEGTEVE (106 aa). The residue at position 57 (Ser57) is a Phosphoserine.

Belongs to the anti-sigma-factor antagonist family. In terms of processing, phosphorylated by RsbW on a serine residue.

Its function is as follows. Positive regulator of sigma-B activity. Non-phosphorylated RsbV binds to RsbW, preventing its association with sigma-B. When phosphorylated, releases RsbW, which is then free to complex with and inactivate sigma-B. The protein is Anti-sigma-B factor antagonist (rsbV) of Staphylococcus epidermidis.